A 159-amino-acid polypeptide reads, in one-letter code: MRIGHGFDVHAFGGTGPIILGGVRIPYEQGLLAHSDGDVALHALTDALLGAAALGDIGKLFPDTDPAFKGADSRELLREAWRRIQAKGYTLGNVDVTIIAQAPKMAPHIPQMRVFIAEDLGCHMDQVNVKATTTEKLGFTGRGEGIACEAVALLMKAGA.

The a divalent metal cation site is built by D8 and H10. Residues 8-10 and 34-35 each bind 4-CDP-2-C-methyl-D-erythritol 2-phosphate; these read DVH and HS. H42 provides a ligand contact to a divalent metal cation. 4-CDP-2-C-methyl-D-erythritol 2-phosphate-binding positions include 56–58, 61–65, 100–106, 132–135, F139, and R142; these read DIG, FPDTD, AQAPKMA, and TTTE.

The protein belongs to the IspF family. Homotrimer. The cofactor is a divalent metal cation.

The enzyme catalyses 4-CDP-2-C-methyl-D-erythritol 2-phosphate = 2-C-methyl-D-erythritol 2,4-cyclic diphosphate + CMP. It participates in isoprenoid biosynthesis; isopentenyl diphosphate biosynthesis via DXP pathway; isopentenyl diphosphate from 1-deoxy-D-xylulose 5-phosphate: step 4/6. Involved in the biosynthesis of isopentenyl diphosphate (IPP) and dimethylallyl diphosphate (DMAPP), two major building blocks of isoprenoid compounds. Catalyzes the conversion of 4-diphosphocytidyl-2-C-methyl-D-erythritol 2-phosphate (CDP-ME2P) to 2-C-methyl-D-erythritol 2,4-cyclodiphosphate (ME-CPP) with a corresponding release of cytidine 5-monophosphate (CMP). This Cronobacter sakazakii (strain ATCC BAA-894) (Enterobacter sakazakii) protein is 2-C-methyl-D-erythritol 2,4-cyclodiphosphate synthase.